The sequence spans 463 residues: tRNA modification GTPase MnmE (463 aa).

Residues R30, E92, and R132 each coordinate (6S)-5-formyl-5,6,7,8-tetrahydrofolate. Residues G227–G386 enclose the TrmE-type G domain. Position 237 (N237) interacts with K(+). GTP-binding positions include N237–S242, T256–T262, D281–G284, and N342–D345. S241 contacts Mg(2+). K(+) is bound by residues T256, L258, and T261. T262 lines the Mg(2+) pocket. Residue K463 participates in (6S)-5-formyl-5,6,7,8-tetrahydrofolate binding.

Belongs to the TRAFAC class TrmE-Era-EngA-EngB-Septin-like GTPase superfamily. TrmE GTPase family. As to quaternary structure, homodimer. Heterotetramer of two MnmE and two MnmG subunits. The cofactor is K(+).

It is found in the cytoplasm. Exhibits a very high intrinsic GTPase hydrolysis rate. Involved in the addition of a carboxymethylaminomethyl (cmnm) group at the wobble position (U34) of certain tRNAs, forming tRNA-cmnm(5)s(2)U34. This is tRNA modification GTPase MnmE from Synechococcus sp. (strain CC9311).